We begin with the raw amino-acid sequence, 128 residues long: MALSKAEILDAIAGMTVLELSELIKEMEEKFGVSAAAVAVAAPAGGAAAGEGAAAVEEQTEFDVILTAAGANKVNTIKVVRAITGLGLKEAKDLVDGAPKPVKEGVAKAEAESVKAQLVEAGAEAEIK.

Belongs to the bacterial ribosomal protein bL12 family. Homodimer. Part of the ribosomal stalk of the 50S ribosomal subunit. Forms a multimeric L10(L12)X complex, where L10 forms an elongated spine to which 2 to 4 L12 dimers bind in a sequential fashion. Binds GTP-bound translation factors.

Its function is as follows. Forms part of the ribosomal stalk which helps the ribosome interact with GTP-bound translation factors. Is thus essential for accurate translation. The polypeptide is Large ribosomal subunit protein bL12 (Acidithiobacillus ferrooxidans (strain ATCC 23270 / DSM 14882 / CIP 104768 / NCIMB 8455) (Ferrobacillus ferrooxidans (strain ATCC 23270))).